A 259-amino-acid chain; its full sequence is Probable 6-phosphogluconolactonase 2 (259 aa).

It belongs to the glucosamine/galactosamine-6-phosphate isomerase family. 6-phosphogluconolactonase subfamily.

Its subcellular location is the cytoplasm. It is found in the cytosol. The enzyme catalyses 6-phospho-D-glucono-1,5-lactone + H2O = 6-phospho-D-gluconate + H(+). It participates in carbohydrate degradation; pentose phosphate pathway; D-ribulose 5-phosphate from D-glucose 6-phosphate (oxidative stage): step 2/3. Functionally, catalyzes the hydrolysis of 6-phosphogluconolactone to 6-phosphogluconate. The polypeptide is Probable 6-phosphogluconolactonase 2 (Arabidopsis thaliana (Mouse-ear cress)).